We begin with the raw amino-acid sequence, 877 residues long: Alanine--tRNA ligase (877 aa).

4 residues coordinate Zn(2+): histidine 567, histidine 571, cysteine 669, and histidine 673.

Belongs to the class-II aminoacyl-tRNA synthetase family. The cofactor is Zn(2+).

It localises to the cytoplasm. The catalysed reaction is tRNA(Ala) + L-alanine + ATP = L-alanyl-tRNA(Ala) + AMP + diphosphate. In terms of biological role, catalyzes the attachment of alanine to tRNA(Ala) in a two-step reaction: alanine is first activated by ATP to form Ala-AMP and then transferred to the acceptor end of tRNA(Ala). Also edits incorrectly charged Ser-tRNA(Ala) and Gly-tRNA(Ala) via its editing domain. The chain is Alanine--tRNA ligase from Rickettsia prowazekii (strain Madrid E).